A 405-amino-acid polypeptide reads, in one-letter code: S-adenosylmethionine synthase (405 aa).

An ATP-binding site is contributed by 141 to 146 (GQGSVD).

It belongs to the AdoMet synthase 2 family. Mg(2+) is required as a cofactor.

It catalyses the reaction L-methionine + ATP + H2O = S-adenosyl-L-methionine + phosphate + diphosphate. Its pathway is amino-acid biosynthesis; S-adenosyl-L-methionine biosynthesis; S-adenosyl-L-methionine from L-methionine: step 1/1. Catalyzes the formation of S-adenosylmethionine from methionine and ATP. The protein is S-adenosylmethionine synthase of Methanococcus maripaludis (strain C6 / ATCC BAA-1332).